The chain runs to 434 residues: Xylose isomerase (434 aa).

Residues histidine 99 and aspartate 102 contribute to the active site. Glutamate 230, glutamate 266, histidine 269, aspartate 294, aspartate 305, aspartate 307, and aspartate 337 together coordinate Mg(2+).

This sequence belongs to the xylose isomerase family. In terms of assembly, homotetramer. Mg(2+) serves as cofactor.

It is found in the cytoplasm. It catalyses the reaction alpha-D-xylose = alpha-D-xylulofuranose. In Dinoroseobacter shibae (strain DSM 16493 / NCIMB 14021 / DFL 12), this protein is Xylose isomerase.